The following is a 173-amino-acid chain: Nicotinamide-nucleotide adenylyltransferase (173 aa).

The protein belongs to the archaeal NMN adenylyltransferase family.

Its subcellular location is the cytoplasm. It catalyses the reaction beta-nicotinamide D-ribonucleotide + ATP + H(+) = diphosphate + NAD(+). It functions in the pathway cofactor biosynthesis; NAD(+) biosynthesis; NAD(+) from nicotinamide D-ribonucleotide: step 1/1. This Methanosarcina acetivorans (strain ATCC 35395 / DSM 2834 / JCM 12185 / C2A) protein is Nicotinamide-nucleotide adenylyltransferase.